Reading from the N-terminus, the 145-residue chain is 3-dehydroquinate dehydratase (145 aa).

The active-site Proton acceptor is the Y23. N75, H81, and D88 together coordinate substrate. Catalysis depends on H101, which acts as the Proton donor. Residues 102–103 (IS) and R112 each bind substrate.

Belongs to the type-II 3-dehydroquinase family. Homododecamer.

It carries out the reaction 3-dehydroquinate = 3-dehydroshikimate + H2O. It participates in metabolic intermediate biosynthesis; chorismate biosynthesis; chorismate from D-erythrose 4-phosphate and phosphoenolpyruvate: step 3/7. In terms of biological role, catalyzes a trans-dehydration via an enolate intermediate. The sequence is that of 3-dehydroquinate dehydratase from Caldicellulosiruptor saccharolyticus (strain ATCC 43494 / DSM 8903 / Tp8T 6331).